We begin with the raw amino-acid sequence, 372 residues long: Glutamate 5-kinase (372 aa).

Lys14 contacts ATP. Substrate is bound by residues Ser54, Asp141, and Asn153. 173 to 174 (TD) serves as a coordination point for ATP. Residues 280-358 (RGTLVLDDGA…ESIVRELGYM (79 aa)) form the PUA domain.

Belongs to the glutamate 5-kinase family.

It localises to the cytoplasm. The enzyme catalyses L-glutamate + ATP = L-glutamyl 5-phosphate + ADP. Its pathway is amino-acid biosynthesis; L-proline biosynthesis; L-glutamate 5-semialdehyde from L-glutamate: step 1/2. Functionally, catalyzes the transfer of a phosphate group to glutamate to form L-glutamate 5-phosphate. The polypeptide is Glutamate 5-kinase (Pseudomonas syringae pv. syringae (strain B728a)).